The following is a 67-amino-acid chain: ATP synthase protein 8 (67 aa).

Residues 8–24 (TWFITILSMLMTLFILF) form a helical membrane-spanning segment. Lys54 bears the N6-acetyllysine; alternate mark. Lys54 bears the N6-succinyllysine; alternate mark. Lys57 carries the N6-acetyllysine modification.

The protein belongs to the ATPase protein 8 family. In terms of assembly, F-type ATPases have 2 components, CF(1) - the catalytic core - and CF(0) - the membrane proton channel. Component of an ATP synthase complex composed of ATP5PB, ATP5MC1, ATP5F1E, ATP5PD, ATP5ME, ATP5PF, ATP5MF, MT-ATP6, MT-ATP8, ATP5F1A, ATP5F1B, ATP5F1D, ATP5F1C, ATP5PO, ATP5MG, ATP5MK and ATP5MJ. Interacts with PRICKLE3.

It is found in the mitochondrion membrane. In terms of biological role, mitochondrial membrane ATP synthase (F(1)F(0) ATP synthase or Complex V) produces ATP from ADP in the presence of a proton gradient across the membrane which is generated by electron transport complexes of the respiratory chain. F-type ATPases consist of two structural domains, F(1) - containing the extramembraneous catalytic core and F(0) - containing the membrane proton channel, linked together by a central stalk and a peripheral stalk. During catalysis, ATP synthesis in the catalytic domain of F(1) is coupled via a rotary mechanism of the central stalk subunits to proton translocation. Part of the complex F(0) domain. Minor subunit located with subunit a in the membrane. This Vicugna pacos (Alpaca) protein is ATP synthase protein 8 (MT-ATP8).